Here is a 39-residue protein sequence, read N- to C-terminus: MTIDRTYPIFTVRWLAIHGLAVPTVSFLGSISAMQFIQR.

A helical membrane pass occupies residues 14 to 30 (WLAIHGLAVPTVSFLGS). Position 18 (histidine 18) interacts with heme.

It belongs to the PsbE/PsbF family. Heterodimer of an alpha subunit and a beta subunit. PSII is composed of 1 copy each of membrane proteins PsbA, PsbB, PsbC, PsbD, PsbE, PsbF, PsbH, PsbI, PsbJ, PsbK, PsbL, PsbM, PsbT, PsbX, PsbY, PsbZ, Psb30/Ycf12, at least 3 peripheral proteins of the oxygen-evolving complex and a large number of cofactors. It forms dimeric complexes. Requires heme b as cofactor.

The protein localises to the plastid. Its subcellular location is the chloroplast thylakoid membrane. Its function is as follows. This b-type cytochrome is tightly associated with the reaction center of photosystem II (PSII). PSII is a light-driven water:plastoquinone oxidoreductase that uses light energy to abstract electrons from H(2)O, generating O(2) and a proton gradient subsequently used for ATP formation. It consists of a core antenna complex that captures photons, and an electron transfer chain that converts photonic excitation into a charge separation. The sequence is that of Cytochrome b559 subunit beta from Allium textile (Textile onion).